The chain runs to 401 residues: 4-hydroxy-3-methylbut-2-en-1-yl diphosphate synthase (ferredoxin) (401 aa).

[4Fe-4S] cluster contacts are provided by Cys306, Cys309, Cys340, and Glu347.

Belongs to the IspG family. Requires [4Fe-4S] cluster as cofactor.

The enzyme catalyses (2E)-4-hydroxy-3-methylbut-2-enyl diphosphate + 2 oxidized [2Fe-2S]-[ferredoxin] + H2O = 2-C-methyl-D-erythritol 2,4-cyclic diphosphate + 2 reduced [2Fe-2S]-[ferredoxin] + H(+). The protein operates within isoprenoid biosynthesis; isopentenyl diphosphate biosynthesis via DXP pathway; isopentenyl diphosphate from 1-deoxy-D-xylulose 5-phosphate: step 5/6. Converts 2C-methyl-D-erythritol 2,4-cyclodiphosphate (ME-2,4cPP) into 1-hydroxy-2-methyl-2-(E)-butenyl 4-diphosphate. This Synechococcus sp. (strain CC9902) protein is 4-hydroxy-3-methylbut-2-en-1-yl diphosphate synthase (ferredoxin).